The chain runs to 192 residues: Crossover junction endodeoxyribonuclease RuvC (192 aa).

Active-site residues include Asp-9, Glu-70, and Asp-143. Asp-9, Glu-70, and Asp-143 together coordinate Mg(2+). A disordered region spans residues 161-192; the sequence is GASVATTGPGSSSLTPAQRAWAEAEAKARRAR. Polar residues predominate over residues 163 to 176; the sequence is SVATTGPGSSSLTP. Basic and acidic residues predominate over residues 182 to 192; it reads AEAEAKARRAR.

This sequence belongs to the RuvC family. In terms of assembly, homodimer which binds Holliday junction (HJ) DNA. The HJ becomes 2-fold symmetrical on binding to RuvC with unstacked arms; it has a different conformation from HJ DNA in complex with RuvA. In the full resolvosome a probable DNA-RuvA(4)-RuvB(12)-RuvC(2) complex forms which resolves the HJ. Requires Mg(2+) as cofactor.

It is found in the cytoplasm. The enzyme catalyses Endonucleolytic cleavage at a junction such as a reciprocal single-stranded crossover between two homologous DNA duplexes (Holliday junction).. The RuvA-RuvB-RuvC complex processes Holliday junction (HJ) DNA during genetic recombination and DNA repair. Endonuclease that resolves HJ intermediates. Cleaves cruciform DNA by making single-stranded nicks across the HJ at symmetrical positions within the homologous arms, yielding a 5'-phosphate and a 3'-hydroxyl group; requires a central core of homology in the junction. The consensus cleavage sequence is 5'-(A/T)TT(C/G)-3'. Cleavage occurs on the 3'-side of the TT dinucleotide at the point of strand exchange. HJ branch migration catalyzed by RuvA-RuvB allows RuvC to scan DNA until it finds its consensus sequence, where it cleaves and resolves the cruciform DNA. The chain is Crossover junction endodeoxyribonuclease RuvC from Pseudarthrobacter chlorophenolicus (strain ATCC 700700 / DSM 12829 / CIP 107037 / JCM 12360 / KCTC 9906 / NCIMB 13794 / A6) (Arthrobacter chlorophenolicus).